The primary structure comprises 363 residues: Aminomethyltransferase (363 aa).

This sequence belongs to the GcvT family. As to quaternary structure, the glycine cleavage system is composed of four proteins: P, T, L and H.

It catalyses the reaction N(6)-[(R)-S(8)-aminomethyldihydrolipoyl]-L-lysyl-[protein] + (6S)-5,6,7,8-tetrahydrofolate = N(6)-[(R)-dihydrolipoyl]-L-lysyl-[protein] + (6R)-5,10-methylene-5,6,7,8-tetrahydrofolate + NH4(+). The glycine cleavage system catalyzes the degradation of glycine. The protein is Aminomethyltransferase of Staphylococcus aureus (strain N315).